Consider the following 489-residue polypeptide: DNA-dependent metalloprotease SPRTN (489 aa).

Met-1 carries the post-translational modification N-acetylmethionine. The SprT-like domain occupies 45-212 (LQALFVQFND…KTCGGTYIKI (168 aa)). A Zn(2+)-binding site is contributed by His-111. Residue Glu-112 is part of the active site. 2 residues coordinate Zn(2+): His-115 and His-130. Lys-230 carries the post-translational modification N6-acetyllysine. The SHP-box motif lies at 253-261 (FSGKGYVLG). Ser-268 carries the phosphoserine modification. Residue Lys-303 forms a Glycyl lysine isopeptide (Lys-Gly) (interchain with G-Cter in SUMO2) linkage. Positions 325–332 (QNVLSNYF) match the PIP-box motif. Lys-341 participates in a covalent cross-link: Glycyl lysine isopeptide (Lys-Gly) (interchain with G-Cter in SUMO2); alternate. A Glycyl lysine isopeptide (Lys-Gly) (interchain with G-Cter in ubiquitin); alternate cross-link involves residue Lys-341. Positions 357-409 (GNIPKNSVSSSSQRRVSSSKISLRNSSKVTESASVMPSQDVSGSEDTFPNKRP) are disordered. A Glycyl lysine isopeptide (Lys-Gly) (interchain with G-Cter in SUMO2) cross-link involves residue Lys-361. Residues 363–383 (SVSSSSQRRVSSSKISLRNSS) are compositionally biased toward low complexity. 2 positions are modified to phosphoserine; by CHEK1: Ser-373 and Ser-374. A Glycyl lysine isopeptide (Lys-Gly) (interchain with G-Cter in SUMO2); alternate cross-link involves residue Lys-376. Residue Lys-376 forms a Glycyl lysine isopeptide (Lys-Gly) (interchain with G-Cter in ubiquitin); alternate linkage. Ser-383 carries the post-translational modification Phosphoserine; by CHEK1. The span at 384-403 (KVTESASVMPSQDVSGSEDT) shows a compositional bias: polar residues. Positions 402 to 413 (DTFPNKRPRLED) match the Nuclear localization signal motif. Lys-414 participates in a covalent cross-link: Glycyl lysine isopeptide (Lys-Gly) (interchain with G-Cter in ubiquitin). Glycyl lysine isopeptide (Lys-Gly) (interchain with G-Cter in SUMO2) cross-links involve residues Lys-423 and Lys-424. The interval 428-453 (KSSGNDPKYSTTTAQNSSSSSSQSKM) is disordered. Residue Lys-435 forms a Glycyl lysine isopeptide (Lys-Gly) (interchain with G-Cter in ubiquitin) linkage. Positions 437–451 (STTTAQNSSSSSSQS) are enriched in low complexity. The UBZ4-type zinc-finger motif lies at 453–480 (MVNCPVCQNEVLESQINEHLDWCLEGDS). Cys-456, Cys-459, His-471, and Cys-475 together coordinate Zn(2+). Residue Lys-484 forms a Glycyl lysine isopeptide (Lys-Gly) (interchain with G-Cter in SUMO2) linkage.

Belongs to the Spartan family. Homodimer. Interacts (VIA PIP-box) with PCNA (when ubiquitinated). Interacts (via its SHP-box) with VCP/p97. Interacts with RAD18. Interacts with KCTD13 and POLD3. Zn(2+) is required as a cofactor. Post-translationally, autocatalytically cleaved in response to double-stranded DNA-binding: autocatalytic cleavage takes place in trans and leads to inactivation. In terms of processing, monoubiquitinated; monoubiquitination promotes exclusion from chromatin. Deubiquitinated by VCPIP1: deubiquitination is required for subsequent acetylation and recruitment to chromatin and DNA damage sites. Acetylated following deubiquitination by VCPIP1, leading to recruitment to chromatin and DNA damage sites. Post-translationally, phosphorylation by CHEK1 promotes recruitment to chromatin.

Its subcellular location is the nucleus. It localises to the chromosome. DNA-binding activates the protease activity: single-stranded DNA-binding specifically activates ability to cleave covalent DNA-protein cross-links (DPCs). In contrast, double-stranded DNA-binding specifically activates autocatalytic cleavage, and subsequent inactivation. DNA-dependent metalloendopeptidase that mediates the proteolytic cleavage of covalent DNA-protein cross-links (DPCs) during DNA synthesis, thereby playing a key role in maintaining genomic integrity. DPCs are highly toxic DNA lesions that interfere with essential chromatin transactions, such as replication and transcription, and which are induced by reactive agents, such as UV light or formaldehyde. Associates with the DNA replication machinery and specifically removes DPCs during DNA synthesis. Catalyzes proteolytic cleavage of the HMCES DNA-protein cross-link following unfolding by the BRIP1/FANCJ helicase. Acts as a pleiotropic protease for DNA-binding proteins cross-linked with DNA, such as TOP1, TOP2A, histones H3 and H4. Mediates degradation of DPCs that are not ubiquitinated, while it is not able to degrade ubiquitinated DPCs. SPRTN activation requires polymerase collision with DPCs followed by helicase bypass of DPCs. Involved in recruitment of VCP/p97 to sites of DNA damage. Also acts as an activator of CHEK1 during normal DNA replication by mediating proteolytic cleavage of CHEK1, thereby promoting CHEK1 removal from chromatin and subsequent activation. Does not activate CHEK1 in response to DNA damage. May also act as a 'reader' of ubiquitinated PCNA: recruited to sites of UV damage and interacts with ubiquitinated PCNA and RAD18, the E3 ubiquitin ligase that monoubiquitinates PCNA. Facilitates chromatin association of RAD18 and is required for efficient PCNA monoubiquitination, promoting a feed-forward loop to enhance PCNA ubiquitination and translesion DNA synthesis. This is DNA-dependent metalloprotease SPRTN from Homo sapiens (Human).